A 232-amino-acid polypeptide reads, in one-letter code: Urease accessory protein UreF (232 aa).

The protein belongs to the UreF family. UreD, UreF and UreG form a complex that acts as a GTP-hydrolysis-dependent molecular chaperone, activating the urease apoprotein by helping to assemble the nickel containing metallocenter of UreC. The UreE protein probably delivers the nickel.

Its subcellular location is the cytoplasm. Functionally, required for maturation of urease via the functional incorporation of the urease nickel metallocenter. In Azorhizobium caulinodans (strain ATCC 43989 / DSM 5975 / JCM 20966 / LMG 6465 / NBRC 14845 / NCIMB 13405 / ORS 571), this protein is Urease accessory protein UreF.